A 395-amino-acid polypeptide reads, in one-letter code: Phosphatidylinositol 4-phosphate 5-kinase-like protein 1 (395 aa).

Residues Met-1–Ser-25 form a disordered region. The PIPK domain maps to Ala-37–Thr-394.

In terms of assembly, interacts with type I phosphatidylinositol 4-phosphate 5-kinases, including PIP5K1A and PIP5K1B. As to expression, highly expressed in brain and testis, relatively to heart, spleen, lung, liver, skeletal muscle and kidney.

It is found in the cytoplasm. The protein resides in the membrane. May act as a scaffold to localize and regulate type I phosphatidylinositol 4-phosphate 5-kinases to specific compartments within the cell, where they generate PI(4,5)P2 for actin nucleation, signaling and scaffold protein recruitment and conversion to PI(3,4,5)P3. The chain is Phosphatidylinositol 4-phosphate 5-kinase-like protein 1 (Pip5kl1) from Mus musculus (Mouse).